The sequence spans 381 residues: MTETQSLELAKALISRPSVTPDDRDCQKLLVERLYKIGFAAEELHFGDTKNIWLRRGTKVPVVCFAGHTDVVPTGPVEKWDSPPFEPTERDGRLYGRGAADMKTSIACFVTACERFVAEHPDHQGSIALLITSDEEGDALDGTTKVVDVLKARGELIDYCIVGEPTAVDKLGDMIKNGRRGSLSGNLTVKGKQGHIAYPHLAINPVHTFAPALLELTQEVWDEGNKYFPPTSFQISNINGGTGATNVIPGELNVKFNFRFSTESTEAGLKQRVHAILDKHGVQYDLQWSCSGQPFLTQAGKLTDVARAAIAETCGIEAELSTTGGTSDGRFIKAIAKELIELGPSNATIHQINENVRLNDIPKLSAVYEGILARLLAGNAV.

His68 contacts Zn(2+). Residue Asp70 is part of the active site. A Zn(2+)-binding site is contributed by Asp101. Glu135 serves as the catalytic Proton acceptor. Positions 136, 164, and 350 each coordinate Zn(2+).

This sequence belongs to the peptidase M20A family. DapE subfamily. In terms of assembly, homodimer. The cofactor is Zn(2+). It depends on Co(2+) as a cofactor.

The enzyme catalyses N-succinyl-(2S,6S)-2,6-diaminopimelate + H2O = (2S,6S)-2,6-diaminopimelate + succinate. It functions in the pathway amino-acid biosynthesis; L-lysine biosynthesis via DAP pathway; LL-2,6-diaminopimelate from (S)-tetrahydrodipicolinate (succinylase route): step 3/3. Catalyzes the hydrolysis of N-succinyl-L,L-diaminopimelic acid (SDAP), forming succinate and LL-2,6-diaminopimelate (DAP), an intermediate involved in the bacterial biosynthesis of lysine and meso-diaminopimelic acid, an essential component of bacterial cell walls. The protein is Succinyl-diaminopimelate desuccinylase of Neisseria meningitidis serogroup C (strain 053442).